A 185-amino-acid chain; its full sequence is MAEPMTEQQKTENWLEIGTIVAAQGIQGEVRVLSASDFPARFLTKGQRWIRKTPQETPQPLTLKKGKQIPGKNLYILRFTEITDRNQAEALVNYQLLVPATDRLPLEPGEFHVTDLLGLIVYDHDNGDRLGIVTDFYSAGNDLLGITLDKNPDKEVLVPFVEAIVPTVELAEQRLEIKTIPGLLD.

The PRC barrel domain occupies 108 to 183 (PGEFHVTDLL…RLEIKTIPGL (76 aa)).

It belongs to the RimM family. As to quaternary structure, binds ribosomal protein uS19.

The protein resides in the cytoplasm. In terms of biological role, an accessory protein needed during the final step in the assembly of 30S ribosomal subunit, possibly for assembly of the head region. Essential for efficient processing of 16S rRNA. May be needed both before and after RbfA during the maturation of 16S rRNA. It has affinity for free ribosomal 30S subunits but not for 70S ribosomes. The protein is Ribosome maturation factor RimM of Synechocystis sp. (strain ATCC 27184 / PCC 6803 / Kazusa).